The sequence spans 563 residues: MASGDNVDYEAVMVDEFDALNIEVRVSAGPSSSVPGAALSAPRCPGMRALPLKAPVMSTPVPAAAPLPTPPAVDDGPSAVGVGNVPPAVDDVPSAVDDVVIQKETTKYSAKLHAAKVADELKASAGLVFLPGEPSRTYEYSDMGPAFSSNAATSSTSPASTSLTPRKVLYNGRVPSIKDVLAASDVDEVRHMQDLPAFLHAYAHQHDKATVYLLDASQSHPALVDNARVHIDTAALRPAMDEARVTKTAHEIALIREANAVSSAAHRAVMRHIRRFASERQVAALFTAECTVRGAPTQAYAPIAGSGPNAATLHYGANDEPLAGRHVLVLDAGCEVNCYASDVTRTLPLGPTGHFTPEARHIYDLVERMQEACVAAVAPGLLYYSLHLKASAIALRGLLRLGILKGDEKAIWAAGTVAAFFPHGLGHHIGLETHDVTGRDRLLLAAGEREPRAKRDAVSAEMLVGLAAAVATGPPYRGKQMLRPGMVVTVEPGIYFNKDYIEGYFLREDKHRAFIDRDVLARYYPVGGVRIEDCILVTDDGYENLTKAPKGEDMLRIIRGEAQ.

Mn(2+)-binding residues include Asp331, Asp342, Glu491, and Glu532.

This sequence belongs to the peptidase M24B family. Mn(2+) is required as a cofactor.

The enzyme catalyses Release of any N-terminal amino acid, including proline, that is linked to proline, even from a dipeptide or tripeptide.. Functionally, catalyzes the removal of a penultimate prolyl residue from the N-termini of peptides. This is Probable Xaa-Pro aminopeptidase PEPP (PEPP) from Verticillium alfalfae (strain VaMs.102 / ATCC MYA-4576 / FGSC 10136) (Verticillium wilt of alfalfa).